Reading from the N-terminus, the 337-residue chain is ADP-ribosylation factor GTPase-activating protein AGD12 (337 aa).

The Arf-GAP domain maps to 15–137 (KRRIRDLLTQ…EFLKPSLRIT (123 aa)). The C4-type zinc finger occupies 30–53 (CADCGAPDPKWASANIGVFICLKC). Residues 164-281 (TNSSSQQPQL…AMAFGDPEMF (118 aa)) form the C2 domain. 3 residues coordinate Ca(2+): aspartate 250, serine 253, and aspartate 256.

Requires Ca(2+) as cofactor. In terms of tissue distribution, expressed in roots, leaves, flowers and siliques. Low levels of expression in seeds and stems.

The protein localises to the golgi apparatus. The protein resides in the cell membrane. GTPase-activating protein (GAP) for ADP ribosylation factor (ARF). Binds phosphatidylinositol 3-monophosohate (PI-3-P) and anionic phospholipids. This Arabidopsis thaliana (Mouse-ear cress) protein is ADP-ribosylation factor GTPase-activating protein AGD12 (AGD12).